The primary structure comprises 142 residues: Large ribosomal subunit protein uL13 (142 aa).

This sequence belongs to the universal ribosomal protein uL13 family. In terms of assembly, part of the 50S ribosomal subunit.

Its function is as follows. This protein is one of the early assembly proteins of the 50S ribosomal subunit, although it is not seen to bind rRNA by itself. It is important during the early stages of 50S assembly. The sequence is that of Large ribosomal subunit protein uL13 from Helicobacter hepaticus (strain ATCC 51449 / 3B1).